The chain runs to 104 residues: 10 kDa heat shock protein, mitochondrial (104 aa).

Residue S81 is modified to Phosphoserine.

This sequence belongs to the GroES chaperonin family. As to quaternary structure, homohexamer.

Its subcellular location is the mitochondrion matrix. In terms of biological role, eukaryotic CPN10 homolog which is essential for mitochondrial protein biogenesis, together with CPN60. Binds to CPN60 in the presence of Mg-ATP and suppresses the ATPase activity of the latter. The protein is 10 kDa heat shock protein, mitochondrial (hsp10) of Schizosaccharomyces pombe (strain 972 / ATCC 24843) (Fission yeast).